Consider the following 97-residue polypeptide: Cysteine-rich and transmembrane domain-containing protein 1 (97 aa).

Positions 1–40 are enriched in pro residues; sequence MNQENPPPYPGPGPTAPYPPYPPQPMGPGPMGGPYPPPQG. Residues 1 to 61 form a disordered region; sequence MNQENPPPYP…QGGPQEPPKT (61 aa). A compositionally biased stretch (low complexity) spans 41-50; it reads YPYQGYPQYG. A helical membrane pass occupies residues 74 to 91; it reads LGPSTCLTACWTALCCCC.

Belongs to the CYSTM1 family.

It is found in the membrane. The chain is Cysteine-rich and transmembrane domain-containing protein 1 (CYSTM1) from Homo sapiens (Human).